We begin with the raw amino-acid sequence, 82 residues long: Small ribosomal subunit protein bS18 (82 aa).

Residues 1–20 form a disordered region; the sequence is MVDINQIPTRRPFHRRHKTC.

Belongs to the bacterial ribosomal protein bS18 family. In terms of assembly, part of the 30S ribosomal subunit. Forms a tight heterodimer with protein bS6.

Binds as a heterodimer with protein bS6 to the central domain of the 16S rRNA, where it helps stabilize the platform of the 30S subunit. The polypeptide is Small ribosomal subunit protein bS18 (Brucella suis (strain ATCC 23445 / NCTC 10510)).